Here is a 155-residue protein sequence, read N- to C-terminus: Putative pre-16S rRNA nuclease (155 aa).

The protein belongs to the YqgF nuclease family.

It is found in the cytoplasm. Functionally, could be a nuclease involved in processing of the 5'-end of pre-16S rRNA. The chain is Putative pre-16S rRNA nuclease from Xylella fastidiosa (strain M12).